Consider the following 335-residue polypeptide: tRNA N6-adenosine threonylcarbamoyltransferase (335 aa).

Residues His-111 and His-115 each contribute to the Fe cation site. Substrate contacts are provided by residues 133-137 (LISGG), Asp-166, Gly-179, and Asn-276. Position 301 (Asp-301) interacts with Fe cation.

Belongs to the KAE1 / TsaD family. Fe(2+) is required as a cofactor.

It localises to the cytoplasm. The enzyme catalyses L-threonylcarbamoyladenylate + adenosine(37) in tRNA = N(6)-L-threonylcarbamoyladenosine(37) in tRNA + AMP + H(+). Its function is as follows. Required for the formation of a threonylcarbamoyl group on adenosine at position 37 (t(6)A37) in tRNAs that read codons beginning with adenine. Is involved in the transfer of the threonylcarbamoyl moiety of threonylcarbamoyl-AMP (TC-AMP) to the N6 group of A37, together with TsaE and TsaB. TsaD likely plays a direct catalytic role in this reaction. This is tRNA N6-adenosine threonylcarbamoyltransferase from Wolbachia sp. subsp. Drosophila simulans (strain wRi).